A 156-amino-acid chain; its full sequence is ATP synthase subunit b (156 aa).

Residues 12–32 (VAFLIFVLFCMKFVWPPVIAA) traverse the membrane as a helical segment.

Belongs to the ATPase B chain family. In terms of assembly, F-type ATPases have 2 components, F(1) - the catalytic core - and F(0) - the membrane proton channel. F(1) has five subunits: alpha(3), beta(3), gamma(1), delta(1), epsilon(1). F(0) has three main subunits: a(1), b(2) and c(10-14). The alpha and beta chains form an alternating ring which encloses part of the gamma chain. F(1) is attached to F(0) by a central stalk formed by the gamma and epsilon chains, while a peripheral stalk is formed by the delta and b chains.

It is found in the cell inner membrane. In terms of biological role, f(1)F(0) ATP synthase produces ATP from ADP in the presence of a proton or sodium gradient. F-type ATPases consist of two structural domains, F(1) containing the extramembraneous catalytic core and F(0) containing the membrane proton channel, linked together by a central stalk and a peripheral stalk. During catalysis, ATP synthesis in the catalytic domain of F(1) is coupled via a rotary mechanism of the central stalk subunits to proton translocation. Functionally, component of the F(0) channel, it forms part of the peripheral stalk, linking F(1) to F(0). This Pseudomonas fluorescens (strain Pf0-1) protein is ATP synthase subunit b.